We begin with the raw amino-acid sequence, 297 residues long: Light-independent protochlorophyllide reductase iron-sulfur ATP-binding protein (297 aa).

Residues 41–46 (GIGKST) and lysine 70 each bind ATP. Serine 45 lines the Mg(2+) pocket. [4Fe-4S] cluster is bound by residues cysteine 126 and cysteine 160. Residues 211–212 (NR) and 235–237 (PDL) contribute to the ATP site.

Belongs to the NifH/BchL/ChlL family. Homodimer. Protochlorophyllide reductase is composed of three subunits; BchL, BchN and BchB. The cofactor is [4Fe-4S] cluster.

The catalysed reaction is chlorophyllide a + oxidized 2[4Fe-4S]-[ferredoxin] + 2 ADP + 2 phosphate = protochlorophyllide a + reduced 2[4Fe-4S]-[ferredoxin] + 2 ATP + 2 H2O. The protein operates within porphyrin-containing compound metabolism; bacteriochlorophyll biosynthesis (light-independent). Functionally, component of the dark-operative protochlorophyllide reductase (DPOR) that uses Mg-ATP and reduced ferredoxin to reduce ring D of protochlorophyllide (Pchlide) to form chlorophyllide a (Chlide). This reaction is light-independent. The L component serves as a unique electron donor to the NB-component of the complex, and binds Mg-ATP. The polypeptide is Light-independent protochlorophyllide reductase iron-sulfur ATP-binding protein (Methylorubrum extorquens (strain CM4 / NCIMB 13688) (Methylobacterium extorquens)).